The primary structure comprises 473 residues: Sulfhydrylase-like protein lolC2 (473 aa).

Lys226 is modified (N6-(pyridoxal phosphate)lysine).

This sequence belongs to the trans-sulfuration enzymes family. Requires pyridoxal 5'-phosphate as cofactor.

Its pathway is alkaloid biosynthesis. Functionally, sulfhydrylase-like protein; part of the gene cluster that mediates the biosynthesis of loline alkaloids, potent insecticidal agents composed of a pyrrolizidine ring system and an uncommon ether bridge linking carbons 2 and 7. Lolines are structurally differentiated by the various modifications of the L-amino group and include norloline, loline, N-methylloline, N-acetylloline, N-acetylnorloline, and N-formylloline. The first committed step is the condensation of O-acetyl-L-homoserine (derived from L-aspartic acid) and L-proline, probably catalyzed by the gamma-type pyridoxal 5'-phosphate(PLP)-dependent enzyme lolC, to give the diamino diacid, NACPP. Ensuing cyclization, decarboxylation, and acetylation steps yield 1-exo-acetamidopyrrolizidine (AcAP). LolO is required for installation of the ether bridge upon the pathway intermediate, 1-exo-acetamidopyrrolizidine (AcAP). In sequential 2-oxoglutarate- and O(2)-consuming steps, lolO removes hydrogens from C2 and C7 of AcAP to form both carbon-oxygen bonds in N-acetylnorloline (NANL), the precursor to all other lolines. The enzymes lolD, lolE, lolF and lolT have also been proposed to be involved in the ether-bridge installation. Further processing of the exocyclic moiety of NANL by fungal N-acetamidase (LolN), methyltransferase (LolM), and cytochrome P450 (LolP) enzymes, with occasional involvement of a plant acetyltransferase, generates the other known lolines. LolN transforms NANL to norlonine which is monomethylated and dimethylated to respectively lonine and N-methyllonine (NML) by lolM. LolP catalyzes hydroxylation of the methyl group in N-methylloline (NML) and further oxygenation to N-formylloline (NFL). A plant acetyltransferase is responsible for the acetylation of loline to form N-acetylloline (NAL). LolA might interact with aspartate kinase to prevent feedback inhibition of its activity by these end products and thereby promote production of L-homoserine from L-aspartate. This chain is Sulfhydrylase-like protein lolC2, found in Epichloe uncinata (Endophyte fungus).